Reading from the N-terminus, the 881-residue chain is Alanine--tRNA ligase (881 aa).

Zn(2+) is bound by residues histidine 564, histidine 568, cysteine 673, and histidine 677. Positions 848-867 (GQGGGGRPDMAQAGGPDGDK) are disordered.

Belongs to the class-II aminoacyl-tRNA synthetase family. Zn(2+) serves as cofactor.

The protein localises to the cytoplasm. The enzyme catalyses tRNA(Ala) + L-alanine + ATP = L-alanyl-tRNA(Ala) + AMP + diphosphate. Catalyzes the attachment of alanine to tRNA(Ala) in a two-step reaction: alanine is first activated by ATP to form Ala-AMP and then transferred to the acceptor end of tRNA(Ala). Also edits incorrectly charged Ser-tRNA(Ala) and Gly-tRNA(Ala) via its editing domain. In Hyphomonas neptunium (strain ATCC 15444), this protein is Alanine--tRNA ligase.